The following is a 185-amino-acid chain: MECEACIGMGKDCNSWMKTCAAHEDTCVTFQTEVIAAPVSLTVIFKACGVSDTCHLDYMETTLHDKVKVRIKRSCCTGEDCPLPPFPGLGFQVNRPNRLHCPACIGLFSKECTEHLVSCRASENQCLTVTGKEFGLFFRALSYKGCATESLCALLKKRFWDGLEDIEVDFKCTPALPPPSLASDV.

Intrachain disulfides connect Cys-3-Cys-27, Cys-6-Cys-13, Cys-20-Cys-48, Cys-54-Cys-75, Cys-76-Cys-81, Cys-101-Cys-126, Cys-119-Cys-146, and Cys-152-Cys-172.

The protein belongs to the CNF-like-inhibitor family. Heterodimer with phospholipase A2 inhibitor 31 kDa. As to expression, expressed by the liver.

The protein localises to the secreted. In terms of biological role, inhibits the enzymatic activity of phospholipase A2. The polypeptide is Phospholipase A2 inhibitor 25 kDa subunit (Naja kaouthia (Monocled cobra)).